Here is a 393-residue protein sequence, read N- to C-terminus: NADH-quinone oxidoreductase subunit D (393 aa).

Belongs to the complex I 49 kDa subunit family. As to quaternary structure, NDH-1 is composed of 14 different subunits. Subunits NuoB, C, D, E, F, and G constitute the peripheral sector of the complex.

The protein localises to the cell inner membrane. The catalysed reaction is a quinone + NADH + 5 H(+)(in) = a quinol + NAD(+) + 4 H(+)(out). NDH-1 shuttles electrons from NADH, via FMN and iron-sulfur (Fe-S) centers, to quinones in the respiratory chain. The immediate electron acceptor for the enzyme in this species is believed to be ubiquinone. Couples the redox reaction to proton translocation (for every two electrons transferred, four hydrogen ions are translocated across the cytoplasmic membrane), and thus conserves the redox energy in a proton gradient. The polypeptide is NADH-quinone oxidoreductase subunit D (Ehrlichia chaffeensis (strain ATCC CRL-10679 / Arkansas)).